We begin with the raw amino-acid sequence, 332 residues long: ADP-L-glycero-D-manno-heptose-6-epimerase (332 aa).

NADP(+)-binding positions include 10-11, 31-32, K38, 74-78, and N91; these read FI, DD, and QGACS. The Proton acceptor role is filled by Y138. Residue K142 coordinates NADP(+). Substrate is bound at residue N167. Positions 168 and 176 each coordinate NADP(+). K176 acts as the Proton acceptor in catalysis. Residues R178, H185, 199–202, R212, and Y291 contribute to the substrate site; that span reads FSGW.

Belongs to the NAD(P)-dependent epimerase/dehydratase family. HldD subfamily. Homopentamer. The cofactor is NADP(+).

It carries out the reaction ADP-D-glycero-beta-D-manno-heptose = ADP-L-glycero-beta-D-manno-heptose. It participates in nucleotide-sugar biosynthesis; ADP-L-glycero-beta-D-manno-heptose biosynthesis; ADP-L-glycero-beta-D-manno-heptose from D-glycero-beta-D-manno-heptose 7-phosphate: step 4/4. Its function is as follows. Catalyzes the interconversion between ADP-D-glycero-beta-D-manno-heptose and ADP-L-glycero-beta-D-manno-heptose via an epimerization at carbon 6 of the heptose. This is ADP-L-glycero-D-manno-heptose-6-epimerase from Bordetella avium (strain 197N).